The chain runs to 326 residues: Polycomb complex protein BMI-1 (326 aa).

The segment at 18–57 (CVLCGGYFIDATTIIECLHSFCKTCIVRYLETSKYCPICD) adopts an RING-type zinc-finger fold. Residues 81–95 (KLVPGLFKNEMKRRR) carry the Nuclear localization signal motif. The interaction with PHC2 stretch occupies residues 162–182 (RYLRCPAAMTVMHLRKFLRSK). The segment at 164–228 (LRCPAAMTVM…GPLPLKYRVR (65 aa)) is interaction with E4F1. Residues 236–326 (ISHQRDGLTN…VNGSSATSSG (91 aa)) are disordered. Residues 266–278 (PSTSSCLPSPSTP) show a composition bias toward low complexity. A compositionally biased stretch (polar residues) spans 279–309 (VQSPHPQFPHISSTMNGTSNSPSGNHQSSFA). A compositionally biased stretch (low complexity) spans 315–326 (SSVNGSSATSSG).

In terms of assembly, component of a PRC1-like complex. Identified in a PRC1-like HPRC-H complex with CBX2, CBX4, CBX8, PHC1, PHC2, PHC3 RING1 and RNF2. Interacts with RNF2/RING2. Interacts with RING1. Part of a complex that contains RNF2, UB2D3 and BMI1, where RNF2 and BMI1 form a tight heterodimer, and UB2D3 interacts only with RNF2. The complex composed of RNF2, UB2D3 and BMI1 binds nucleosomes, and has activity only with nucleosomal histone H2A. Interacts with CBX7 and CBX8. Interacts with SPOP. Part of a complex consisting of BMI1, CUL3 and SPOP. Interacts with E4F1. Interacts with PHC2. Interacts with zinc finger protein ZNF277. May be part of a complex including at least ZNF277, BMI1 and RNF2/RING2. Post-translationally, monoubiquitinated. May be polyubiquitinated; which does not lead to proteasomal degradation.

It localises to the nucleus. Its subcellular location is the cytoplasm. Functionally, component of a Polycomb group (PcG) multiprotein PRC1-like complex, a complex class required to maintain the transcriptionally repressive state of many genes, including Hox genes, throughout development. PcG PRC1 complex acts via chromatin remodeling and modification of histones; it mediates monoubiquitination of histone H2A 'Lys-119', rendering chromatin heritably changed in its expressibility. The complex composed of RNF2, UB2D3 and BMI1 binds nucleosomes, and has activity only with nucleosomal histone H2A. In the PRC1-like complex, regulates the E3 ubiquitin-protein ligase activity of RNF2/RING2. The protein is Polycomb complex protein BMI-1 (BMI1) of Homo sapiens (Human).